The following is a 122-amino-acid chain: ATP-dependent Clp protease adapter protein ClpS (122 aa).

It belongs to the ClpS family. Binds to the N-terminal domain of the chaperone ClpA.

Involved in the modulation of the specificity of the ClpAP-mediated ATP-dependent protein degradation. This Pseudomonas fluorescens (strain SBW25) protein is ATP-dependent Clp protease adapter protein ClpS.